The following is a 290-amino-acid chain: ATP synthase gamma chain (290 aa).

The protein belongs to the ATPase gamma chain family. As to quaternary structure, F-type ATPases have 2 components, CF(1) - the catalytic core - and CF(0) - the membrane proton channel. CF(1) has five subunits: alpha(3), beta(3), gamma(1), delta(1), epsilon(1). CF(0) has three main subunits: a, b and c.

The protein localises to the cell membrane. In terms of biological role, produces ATP from ADP in the presence of a proton gradient across the membrane. The gamma chain is believed to be important in regulating ATPase activity and the flow of protons through the CF(0) complex. This chain is ATP synthase gamma chain, found in Roseiflexus castenholzii (strain DSM 13941 / HLO8).